The sequence spans 86 residues: Acyl carrier protein (86 aa).

Positions 7–85 (SKVDNIEQKV…DVVNYIKEHK (79 aa)) constitute a Carrier domain. At S45 the chain carries O-(pantetheine 4'-phosphoryl)serine.

This sequence belongs to the acyl carrier protein (ACP) family. Post-translationally, 4'-phosphopantetheine is transferred from CoA to a specific serine of apo-ACP by AcpS. This modification is essential for activity because fatty acids are bound in thioester linkage to the sulfhydryl of the prosthetic group.

It is found in the cytoplasm. The protein operates within lipid metabolism; fatty acid biosynthesis. In terms of biological role, carrier of the growing fatty acid chain in fatty acid biosynthesis. The chain is Acyl carrier protein from Rickettsia bellii (strain RML369-C).